We begin with the raw amino-acid sequence, 311 residues long: Methenyltetrahydromethanopterin cyclohydrolase (311 aa).

Belongs to the MCH family.

It is found in the cytoplasm. The catalysed reaction is 5,10-methenyl-5,6,7,8-tetrahydromethanopterin + H2O = N(5)-formyl-5,6,7,8-tetrahydromethanopterin + H(+). Catalyzes the hydrolysis of methenyl-H(4)MPT(+) to 5-formyl-H(4)MPT. This Halobacterium salinarum (strain ATCC 29341 / DSM 671 / R1) protein is Methenyltetrahydromethanopterin cyclohydrolase.